The following is a 438-amino-acid chain: Beta-1,3-galactosyl-O-glycosyl-glycoprotein beta-1,6-N-acetylglucosaminyltransferase 3 (438 aa).

Residues 1–6 (MVQWKR) are Cytoplasmic-facing. A helical; Signal-anchor for type II membrane protein transmembrane segment spans residues 7 to 26 (LCQLHYLWALGCYMLLATVA). Over 27 to 438 (LKLSFRLKCD…RYKAIYGTEL (412 aa)) the chain is Lumenal. Intrachain disulfides connect C70-C227, C161-C382, C182-C209, and C391-C423. N289 carries N-linked (GlcNAc...) asparagine glycosylation.

The protein belongs to the glycosyltransferase 14 family. In terms of processing, N-glycosylated. Primarily expressed in mucus-secreting tissues. Expressed in colon, kidney, small intestine, trachea, and stomach, where mucin is produced.

It localises to the golgi apparatus membrane. The enzyme catalyses a 3-O-[beta-D-galactosyl-(1-&gt;3)-N-acetyl-alpha-D-galactosaminyl]-L-seryl-[protein] + UDP-N-acetyl-alpha-D-glucosamine = 3-O-{beta-D-galactosyl-(1-&gt;3)-[N-acetyl-beta-D-glucosaminyl-(1-&gt;6)]-N-acetyl-alpha-D-galactosaminyl}-L-seryl-[protein] + UDP + H(+). It catalyses the reaction a 3-O-[beta-D-galactosyl-(1-&gt;3)-N-acetyl-alpha-D-galactosaminyl]-L-threonyl-[protein] + UDP-N-acetyl-alpha-D-glucosamine = a 3-O-{beta-D-galactosyl-(1-&gt;3)-[N-acetyl-beta-D-glucosaminyl-(1-&gt;6)]-N-acetyl-alpha-D-galactosaminyl}-L-threonyl-[protein] + UDP + H(+). The catalysed reaction is a beta-D-Gal-(1-&gt;4)-beta-D-GlcNAc-(1-&gt;3)-beta-D-Gal-(1-&gt;4)-beta-D-GlcNAc derivative + UDP-N-acetyl-alpha-D-glucosamine = a beta-D-Gal-(1-&gt;4)-beta-D-GlcNAc-(1-&gt;3)-[beta-D-GlcNAc-(1-&gt;6)]-beta-D-Gal-(1-&gt;4)-N-acetyl-beta-D-glucosaminyl derivative + UDP + H(+). It carries out the reaction 3-O-[N-acetyl-beta-D-glucosaminyl-(1-&gt;3)-N-acetyl-alpha-D-galactosaminyl]-L-seryl-[protein] + UDP-N-acetyl-alpha-D-glucosamine = 3-O-[N-acetyl-beta-D-glucosaminyl-(1-&gt;3)-[N-acetyl-beta-D-glucosaminyl-(1-&gt;6)]-N-acetyl-alpha-D-galactosaminyl]-L-seryl-[protein] + UDP + H(+). The enzyme catalyses a 3-O-[N-acetyl-beta-D-glucosaminyl-(1-&gt;3)-N-acetyl-alpha-D-galactosaminyl]-L-threonyl-[protein] + UDP-N-acetyl-alpha-D-glucosamine = 3-O-[N-acetyl-beta-D-glucosaminyl-(1-&gt;3)-[N-acetyl-beta-D-glucosaminyl-(1-&gt;6)]-N-acetyl-alpha-D-galactosaminyl]-L-threonyl-[protein] + UDP + H(+). It participates in protein modification; protein glycosylation. Functionally, glycosyltransferase that can synthesize all known mucin beta 6 N-acetylglucosaminides. Mediates core 2 and core 4 O-glycan branching, 2 important steps in mucin-type biosynthesis. Also has I-branching enzyme activity by converting linear into branched poly-N-acetyllactosaminoglycans, leading to introduce the blood group I antigen during embryonic development. This is Beta-1,3-galactosyl-O-glycosyl-glycoprotein beta-1,6-N-acetylglucosaminyltransferase 3 (GCNT3) from Homo sapiens (Human).